The sequence spans 111 residues: uncharacterized protein (111 aa).

Belongs to the asfivirus E111R family.

This is an uncharacterized protein from Ornithodoros (relapsing fever ticks).